Consider the following 89-residue polypeptide: Small ribosomal subunit protein uS14A (89 aa).

Residues 34–54 (ESLRKLPRDSNPNRLKNRDKI) are disordered.

The protein belongs to the universal ribosomal protein uS14 family. Part of the 30S ribosomal subunit. Contacts proteins S3 and S10.

Its function is as follows. Binds 16S rRNA, required for the assembly of 30S particles and may also be responsible for determining the conformation of the 16S rRNA at the A site. The sequence is that of Small ribosomal subunit protein uS14A from Streptococcus pyogenes serotype M1.